The chain runs to 318 residues: UDP-N-acetylenolpyruvoylglucosamine reductase (318 aa).

The region spanning 38-204 (IGGICPVVVE…LGIEILLKEG (167 aa)) is the FAD-binding PCMH-type domain. R182 is a catalytic residue. The interval 212–232 (SLKDKRDRRNSSQPENKKSAG) is disordered. The segment covering 213–229 (LKDKRDRRNSSQPENKK) has biased composition (basic and acidic residues). The Proton donor role is filled by S233. E310 is a catalytic residue.

Belongs to the MurB family. It depends on FAD as a cofactor.

It localises to the cytoplasm. It carries out the reaction UDP-N-acetyl-alpha-D-muramate + NADP(+) = UDP-N-acetyl-3-O-(1-carboxyvinyl)-alpha-D-glucosamine + NADPH + H(+). It participates in cell wall biogenesis; peptidoglycan biosynthesis. Cell wall formation. In Leptospira borgpetersenii serovar Hardjo-bovis (strain L550), this protein is UDP-N-acetylenolpyruvoylglucosamine reductase.